Here is a 295-residue protein sequence, read N- to C-terminus: Bifunctional protein FolD (295 aa).

Residues Gly-166–Ser-168, Ser-195, and Ile-236 each bind NADP(+).

Belongs to the tetrahydrofolate dehydrogenase/cyclohydrolase family. As to quaternary structure, homodimer.

It catalyses the reaction (6R)-5,10-methylene-5,6,7,8-tetrahydrofolate + NADP(+) = (6R)-5,10-methenyltetrahydrofolate + NADPH. The enzyme catalyses (6R)-5,10-methenyltetrahydrofolate + H2O = (6R)-10-formyltetrahydrofolate + H(+). The protein operates within one-carbon metabolism; tetrahydrofolate interconversion. Functionally, catalyzes the oxidation of 5,10-methylenetetrahydrofolate to 5,10-methenyltetrahydrofolate and then the hydrolysis of 5,10-methenyltetrahydrofolate to 10-formyltetrahydrofolate. This Chlorobium phaeobacteroides (strain DSM 266 / SMG 266 / 2430) protein is Bifunctional protein FolD.